Consider the following 417-residue polypeptide: MLDPNKLRNNYDFFKKKLLERNVNEQLLNQFIQTDKLMRKNLQQLELANQKQSLLAKQVAKQKDNKKLLAESKELKQKIENLNNAYKDSQNISQDLLLNFPNIAHESVPVGKNESANLELLKEGRKPVFDFKPLPHRELCEKLNLVAFDKATKISGTRFVAYTDKAAKLLRAITNLMIDLNKSKYQEWNLPVVINELSLRSTGQLPKFKDDVFKLENTRYYLSPTLEVQLINLHANEIFNEEDLPKYYTATGINFRQEAGSAGKQTKGTIRLHQFQKTELVKFCKPENAINELEAMVRDAEQILKALKLPFRRLLLCTGDMGFSAEKTYDLEVWMAASNEYREVSSCSSCGDFQARRAMIRYKDINNGKNSYVATLNGTALSIDRIFAAILENFQTKDGKILIPQALKKYLDFDTIK.

225–227 (TLE) contributes to the L-serine binding site. 256 to 258 (RQE) provides a ligand contact to ATP. E279 contributes to the L-serine binding site. 343–346 (EVSS) contacts ATP. T379 is an L-serine binding site.

This sequence belongs to the class-II aminoacyl-tRNA synthetase family. Type-1 seryl-tRNA synthetase subfamily. In terms of assembly, homodimer. The tRNA molecule binds across the dimer.

It localises to the cytoplasm. The enzyme catalyses tRNA(Ser) + L-serine + ATP = L-seryl-tRNA(Ser) + AMP + diphosphate + H(+). It carries out the reaction tRNA(Sec) + L-serine + ATP = L-seryl-tRNA(Sec) + AMP + diphosphate + H(+). The protein operates within aminoacyl-tRNA biosynthesis; selenocysteinyl-tRNA(Sec) biosynthesis; L-seryl-tRNA(Sec) from L-serine and tRNA(Sec): step 1/1. Its function is as follows. Catalyzes the attachment of serine to tRNA(Ser). Is also able to aminoacylate tRNA(Sec) with serine, to form the misacylated tRNA L-seryl-tRNA(Sec), which will be further converted into selenocysteinyl-tRNA(Sec). The sequence is that of Serine--tRNA ligase from Mycoplasma genitalium (strain ATCC 33530 / DSM 19775 / NCTC 10195 / G37) (Mycoplasmoides genitalium).